The primary structure comprises 154 residues: Cathelicidin-2 (154 aa).

An N-terminal signal peptide occupies residues 1 to 17; the sequence is MLSCWVLLLALLGGVCA. Positions 18 to 122 are excised as a propeptide; the sequence is LPAPLSYPQA…RCRDASSDPV (105 aa). 2 disulfide bridges follow: Cys75–Cys86 and Cys97–Cys114.

The protein belongs to the cathelicidin family. As to expression, detected in trachea, lung, proventriculus, duodenum, jejunum, ileum, caeca, colon, caecal tonsil, bursa of Fabricius, kidney, ovary, testis, thymus, liver, spleen, bone marrow, skin, uropygial gland, muscle and brain.

The protein resides in the secreted. In terms of biological role, binds bacterial lipopolysaccharide (LPS). Has potent antimicrobial activity against Gram-positive and Gram-negative bacteria (in vitro). Has hemolytic activity (in vitro). May play a role in the innate immune response. This is Cathelicidin-2 (CATHL2) from Gallus gallus (Chicken).